We begin with the raw amino-acid sequence, 110 residues long: Acylphosphatase (110 aa).

One can recognise an Acylphosphatase-like domain in the interval 21–108; it reads TRRYLVTGRV…TNLKSFRIEG (88 aa). Residues R36 and N54 contribute to the active site.

It belongs to the acylphosphatase family.

It carries out the reaction an acyl phosphate + H2O = a carboxylate + phosphate + H(+). This Koribacter versatilis (strain Ellin345) protein is Acylphosphatase (acyP).